We begin with the raw amino-acid sequence, 1040 residues long: Tudor domain-containing protein 5 (1040 aa).

3 HTH OST-type domains span residues Ile-7–Pro-80, Val-122–Ser-197, and Val-291–Asp-365. The 60-residue stretch at Phe-533–Leu-592 folds into the Tudor domain. Phosphoserine is present on Ser-809. Disordered stretches follow at residues Asp-857–Asp-891 and Ala-912–Lys-975. Composition is skewed to polar residues over residues Glu-872–Asp-891 and Ala-912–Thr-924. A Phosphoserine modification is found at Ser-943. Positions Asn-946 to Gly-956 are enriched in polar residues. A compositionally biased stretch (basic and acidic residues) spans Leu-958–Lys-975.

This sequence belongs to the TDRD5 family. Gonad-specific. Mainly expressed in testis. Present at low level in ovary (at protein level).

Its subcellular location is the cytoplasm. In terms of biological role, required during spermiogenesis to participate in the repression transposable elements and prevent their mobilization, which is essential for the germline integrity. Probably acts via the piRNA metabolic process, which mediates the repression of transposable elements during meiosis by forming complexes composed of piRNAs and Piwi proteins and govern the methylation and subsequent repression of transposons. Required for chromatoid body (CB) assembly. The sequence is that of Tudor domain-containing protein 5 (Tdrd5) from Mus musculus (Mouse).